A 330-amino-acid chain; its full sequence is Tetraacyldisaccharide 4'-kinase (330 aa).

Position 58–65 (58–65 (TVGGSGKT)) interacts with ATP.

It belongs to the LpxK family.

The enzyme catalyses a lipid A disaccharide + ATP = a lipid IVA + ADP + H(+). It participates in glycolipid biosynthesis; lipid IV(A) biosynthesis; lipid IV(A) from (3R)-3-hydroxytetradecanoyl-[acyl-carrier-protein] and UDP-N-acetyl-alpha-D-glucosamine: step 6/6. Its function is as follows. Transfers the gamma-phosphate of ATP to the 4'-position of a tetraacyldisaccharide 1-phosphate intermediate (termed DS-1-P) to form tetraacyldisaccharide 1,4'-bis-phosphate (lipid IVA). The sequence is that of Tetraacyldisaccharide 4'-kinase from Shewanella halifaxensis (strain HAW-EB4).